A 66-amino-acid chain; its full sequence is Alpha-like toxin BmK-M7 (66 aa).

The LCN-type CS-alpha/beta domain occupies 2–64; it reads RDGYIALPHN…VPIRVPGRCH (63 aa). Cystine bridges form between Cys12/Cys63, Cys16/Cys36, Cys22/Cys46, and Cys26/Cys48.

It belongs to the long (4 C-C) scorpion toxin superfamily. Sodium channel inhibitor family. Alpha subfamily. As to expression, expressed by the venom gland.

It is found in the secreted. Alpha toxins bind voltage-independently at site-3 of sodium channels (Nav) and inhibit the inactivation of the activated channels, thereby blocking neuronal transmission. This toxin is active on both mammals and insects. It can be considered as a cardiotoxin, as it can bind to human cardiac sodium channel and modify its normal properties. The chain is Alpha-like toxin BmK-M7 from Olivierus martensii (Manchurian scorpion).